A 973-amino-acid polypeptide reads, in one-letter code: UvrABC system protein A (973 aa).

34 to 41 (GLSGSGKS) is a binding site for ATP. ABC transporter domains follow at residues 330–609 (WAKS…PNSI) and 629–958 (AKKN…QFLK). Position 662 to 669 (662 to 669 (GVSGGGKS)) interacts with ATP. The C4-type zinc-finger motif lies at 761–787 (CEACQGDGVIKIEMHFLPDVYVTCDVC).

This sequence belongs to the ABC transporter superfamily. UvrA family. In terms of assembly, forms a heterotetramer with UvrB during the search for lesions.

Its subcellular location is the cytoplasm. The UvrABC repair system catalyzes the recognition and processing of DNA lesions. UvrA is an ATPase and a DNA-binding protein. A damage recognition complex composed of 2 UvrA and 2 UvrB subunits scans DNA for abnormalities. When the presence of a lesion has been verified by UvrB, the UvrA molecules dissociate. The sequence is that of UvrABC system protein A from Mesorhizobium japonicum (strain LMG 29417 / CECT 9101 / MAFF 303099) (Mesorhizobium loti (strain MAFF 303099)).